Here is a 375-residue protein sequence, read N- to C-terminus: Monocyte differentiation antigen CD14 (375 aa).

The first 19 residues, 1 to 19 (MERASCLLLLLLPLVHVSA), serve as a signal peptide directing secretion. Disulfide bonds link cysteine 25–cysteine 36 and cysteine 34–cysteine 51. Residue asparagine 37 is glycosylated (N-linked (GlcNAc...) asparagine). LRR repeat units follow at residues 54–82 (AVEVEIHAGGLNLEPFLKRVDADADPRQY), 83–118 (ADTVKALRVRRLTVGAAQVPAQLLVGALRVLAYSRL), 119–144 (KELTLEDLKITGTMPPLPLEATGLAL), 145–172 (SSLRLRNVSWATGRSWLAELQQWLKPGL), 173–196 (KVLSIAQAHSPAFSCEQVRAFPAL), 197–224 (TSLDLSDNPGLGERGLMAALCPHKFPAI), 225–251 (QNLALRNTGMETPTGVCAALAAAGVQP), 252–278 (HSLDLSHNSLRATVNPSAPRCMWSSAL), 279–299 (NSLNLSFAGLEQVPKGLPAKL), 300–321 (RVLDLSCNRLNRAPQPDELPEV), and 322–349 (DNLTLDGNPFLVPGTALPHEGSMNSGVV). Asparagine 151 carries an N-linked (GlcNAc...) asparagine glycan. 2 disulfides stabilise this stretch: cysteine 187–cysteine 217 and cysteine 241–cysteine 272. A glycan (N-linked (GlcNAc...) asparagine) is linked at asparagine 282. The interval 290 to 375 (QVPKGLPAKL…VLLQGARGFA (86 aa)) is required for response to bacterial lipopolysaccharide (LPS). The N-linked (GlcNAc...) asparagine glycan is linked to asparagine 323. Threonine 336 is a glycosylation site (O-linked (GalNAc...) threonine). Residue asparagine 345 is the site of GPI-anchor amidated asparagine attachment. Positions 346–375 (SGVVPACARSTLSVGVSGTLVLLQGARGFA) are cleaved as a propeptide — removed in mature form.

In terms of assembly, interacts with LPS-bound LPB. Belongs to the lipopolysaccharide (LPS) receptor, a multi-protein complex containing at least CD14, LY96 and TLR4. Interacts with LPAR1. Interacts with the TLR2:TLR6 or TLR2:TLR1 heterodimers; upon interaction with ligands such as diacylated lipopeptides and triacylated lipopeptides, respectively. Interacts with MYO18A. Interacts with FSTL1. Post-translationally, N- and O- glycosylated. O-glycosylated with a core 1 or possibly core 8 glycan. Detected on macrophages (at protein level). Expressed strongly on the surface of monocytes and weakly on the surface of granulocytes; also expressed by most tissue macrophages.

The protein localises to the cell membrane. The protein resides in the secreted. Its subcellular location is the membrane raft. It is found in the golgi apparatus. Coreceptor for bacterial lipopolysaccharide. In concert with LBP, binds to monomeric lipopolysaccharide and delivers it to the LY96/TLR4 complex, thereby mediating the innate immune response to bacterial lipopolysaccharide (LPS). Acts via MyD88, TIRAP and TRAF6, leading to NF-kappa-B activation, cytokine secretion and the inflammatory response. Acts as a coreceptor for TLR2:TLR6 heterodimer in response to diacylated lipopeptides and for TLR2:TLR1 heterodimer in response to triacylated lipopeptides, these clusters trigger signaling from the cell surface and subsequently are targeted to the Golgi in a lipid-raft dependent pathway. Binds electronegative LDL (LDL(-)) and mediates the cytokine release induced by LDL(-). The sequence is that of Monocyte differentiation antigen CD14 (CD14) from Homo sapiens (Human).